A 468-amino-acid chain; its full sequence is 5-carboxymethyl-2-hydroxymuconate semialdehyde dehydrogenase (468 aa).

Glu244 is an active-site residue. The Nucleophile role is filled by Cys278.

Belongs to the aldehyde dehydrogenase family. Homodimer.

The catalysed reaction is 2-hydroxy-5-carboxymethylmuconate semialdehyde + NAD(+) + H2O = (2E,4Z)-5-hydroxypenta-2,4-diene-1,2,5-tricarboxylate + NADH + 2 H(+). It participates in aromatic compound metabolism; 4-hydroxyphenylacetate degradation; pyruvate and succinate semialdehyde from 4-hydroxyphenylacetate: step 3/7. Catalyzes the conversion of 5-carboxymethyl-2-hydroxy-muconic semialdehyde (CHMS) into 5-carboxymethyl-2-hydroxy-muconic acid (CHM or (2E,4Z)-5-hydroxypenta-2,4-diene-1,2,5-tricarboxylate). Is involved in a meta-cleavage pathway for the catabolism of 4-hydroxyphenylacetate (4-HPA) via homoprotocatechuate (HPC or 3,4-dihydroxyphenylacetate). In Escherichia coli, this protein is 5-carboxymethyl-2-hydroxymuconate semialdehyde dehydrogenase.